Here is a 420-residue protein sequence, read N- to C-terminus: Threonine aspartase 1 (420 aa).

The disordered stretch occupies residues M1–G23. T234 serves as the catalytic Nucleophile.

This sequence belongs to the Ntn-hydrolase family. As to quaternary structure, intramolecular proteolysis generates 2 subunits, alpha and beta, which reassemble through a non-covalent association to form the fully active enzyme.

In terms of biological role, protease responsible for KMT2A/MLL1 processing and activation. It also activates KMT2D/MLL2. Through substrate activation, it controls the expression of HOXA genes, and the expression of key cell cycle regulators including CCNA1, CCNB1, CCNE1 and CDKN2A. In Homo sapiens (Human), this protein is Threonine aspartase 1 (TASP1).